The chain runs to 597 residues: Alpha-1,2-mannosyltransferase MNN2 (597 aa).

Over 1–12 the chain is Cytoplasmic; the sequence is MLLTKRFSKLFK. A helical; Signal-anchor for type II membrane protein transmembrane segment spans residues 13 to 28; sequence LTFIVLILCGLFVITN. Residues 29 to 597 lie on the Extracellular side of the membrane; the sequence is KYMDENTSVK…STHDKAIAGK (569 aa). N-linked (GlcNAc...) asparagine glycosylation is found at N34, N363, and N473.

The protein belongs to the MNN1/MNT family. Interacts with SVP26.

It is found in the golgi apparatus membrane. It participates in protein modification; protein glycosylation. Its function is as follows. Alpha-1,2-mannosyltransferase, responsible for addition of the first alpha-1,2-linked mannose to form the branches on the mannan backbone of oligosaccharides. The protein is Alpha-1,2-mannosyltransferase MNN2 (MNN2) of Saccharomyces cerevisiae (strain ATCC 204508 / S288c) (Baker's yeast).